A 715-amino-acid polypeptide reads, in one-letter code: Fatty acid oxidation complex subunit alpha (715 aa).

The segment at 1–189 is enoyl-CoA hydratase/isomerase; it reads MIYQGETLTV…KVGAIDAVVA (189 aa). Substrate is bound at residue Asp-296. A 3-hydroxyacyl-CoA dehydrogenase region spans residues 311 to 715; the sequence is AKATSHAAVL…EMAAQGKTFY (405 aa). Residues Met-325, Asp-344, 401–403, Lys-408, and Ser-430 each bind NAD(+); that span reads VVE. His-451 functions as the For 3-hydroxyacyl-CoA dehydrogenase activity in the catalytic mechanism. Position 454 (Asn-454) interacts with NAD(+). Asn-501 and Tyr-661 together coordinate substrate.

In the N-terminal section; belongs to the enoyl-CoA hydratase/isomerase family. The protein in the C-terminal section; belongs to the 3-hydroxyacyl-CoA dehydrogenase family. Heterotetramer of two alpha chains (FadB) and two beta chains (FadA).

It catalyses the reaction a (3S)-3-hydroxyacyl-CoA + NAD(+) = a 3-oxoacyl-CoA + NADH + H(+). The catalysed reaction is a (3S)-3-hydroxyacyl-CoA = a (2E)-enoyl-CoA + H2O. The enzyme catalyses a 4-saturated-(3S)-3-hydroxyacyl-CoA = a (3E)-enoyl-CoA + H2O. It carries out the reaction (3S)-3-hydroxybutanoyl-CoA = (3R)-3-hydroxybutanoyl-CoA. It catalyses the reaction a (3Z)-enoyl-CoA = a 4-saturated (2E)-enoyl-CoA. The catalysed reaction is a (3E)-enoyl-CoA = a 4-saturated (2E)-enoyl-CoA. The protein operates within lipid metabolism; fatty acid beta-oxidation. Involved in the aerobic and anaerobic degradation of long-chain fatty acids via beta-oxidation cycle. Catalyzes the formation of 3-oxoacyl-CoA from enoyl-CoA via L-3-hydroxyacyl-CoA. It can also use D-3-hydroxyacyl-CoA and cis-3-enoyl-CoA as substrate. The sequence is that of Fatty acid oxidation complex subunit alpha from Aeromonas hydrophila subsp. hydrophila (strain ATCC 7966 / DSM 30187 / BCRC 13018 / CCUG 14551 / JCM 1027 / KCTC 2358 / NCIMB 9240 / NCTC 8049).